The chain runs to 983 residues: Importin beta-like protein kap113 (983 aa).

One can recognise an Importin N-terminal domain in the interval 24–96 (AEGHLNNWKK…RCNALLGSIK (73 aa)).

It belongs to the importin beta family.

It is found in the nucleus. In terms of biological role, functions as a component of the nuclear pore complex (NPC). NPC components, collectively referred to as nucleoporins (NUPs), can play the role of both NPC structural components and of docking or interaction partners for transiently associated nuclear transport factors. Active directional transport is assured by both, a Phe-Gly (FG) repeat affinity gradient for these transport factors across the NPC and a transport cofactor concentration gradient across the nuclear envelope. Involved in the export of mRNA from the nucleus to the cytoplasm. May play a role in mitotic spindle formation and/or function. In Schizosaccharomyces pombe (strain 972 / ATCC 24843) (Fission yeast), this protein is Importin beta-like protein kap113 (kap113).